A 289-amino-acid chain; its full sequence is 4-hydroxy-tetrahydrodipicolinate synthase (289 aa).

A pyruvate-binding site is contributed by Thr42. The active-site Proton donor/acceptor is Tyr129. Lys157 functions as the Schiff-base intermediate with substrate in the catalytic mechanism. Pyruvate is bound at residue Ile198.

It belongs to the DapA family. As to quaternary structure, homotetramer; dimer of dimers.

The protein localises to the cytoplasm. It carries out the reaction L-aspartate 4-semialdehyde + pyruvate = (2S,4S)-4-hydroxy-2,3,4,5-tetrahydrodipicolinate + H2O + H(+). The protein operates within amino-acid biosynthesis; L-lysine biosynthesis via DAP pathway; (S)-tetrahydrodipicolinate from L-aspartate: step 3/4. In terms of biological role, catalyzes the condensation of (S)-aspartate-beta-semialdehyde [(S)-ASA] and pyruvate to 4-hydroxy-tetrahydrodipicolinate (HTPA). This chain is 4-hydroxy-tetrahydrodipicolinate synthase, found in Chlamydia caviae (strain ATCC VR-813 / DSM 19441 / 03DC25 / GPIC) (Chlamydophila caviae).